A 548-amino-acid polypeptide reads, in one-letter code: Protein swallow (548 aa).

3 disordered regions span residues 67–109 (AKTC…GRSS), 184–206 (NCQT…SSSF), and 358–428 (FSSV…ELIS). Over residues 79-91 (QEDEDDYDEDVDG) the composition is skewed to acidic residues. Residues 189-205 (SNSDSNYNSNSNNSSSS) are compositionally biased toward low complexity. 2 positions are modified to phosphoserine: S362 and S368. Residues 388-402 (APNNSETSQPSSNDS) are compositionally biased toward polar residues. Positions 406 to 420 (VEAHEEERPSSRRQW) are enriched in basic and acidic residues. Residues S463, S471, S475, S483, S485, and S487 each carry the phosphoserine modification.

May be a homo- or heterodimer.

The protein resides in the nucleus. Has a role in localizing bicoid mRNA at the anterior margin of the oocyte during oogenesis, and a poorly characterized role in nuclear divisions in early embryogenesis. This Drosophila melanogaster (Fruit fly) protein is Protein swallow (swa).